The following is a 286-amino-acid chain: 33 kDa chaperonin (286 aa).

Disulfide bonds link C225/C227 and C258/C261.

It belongs to the HSP33 family. Post-translationally, under oxidizing conditions two disulfide bonds are formed involving the reactive cysteines. Under reducing conditions zinc is bound to the reactive cysteines and the protein is inactive.

It localises to the cytoplasm. Functionally, redox regulated molecular chaperone. Protects both thermally unfolding and oxidatively damaged proteins from irreversible aggregation. Plays an important role in the bacterial defense system toward oxidative stress. In Shewanella sp. (strain ANA-3), this protein is 33 kDa chaperonin.